Consider the following 139-residue polypeptide: Large ribosomal subunit protein uL16 (139 aa).

Residues 1 to 17 are compositionally biased toward basic residues; the sequence is MLMPKRVKYRKTQRGRM. The tract at residues 1–24 is disordered; sequence MLMPKRVKYRKTQRGRMKGNSGRG.

It belongs to the universal ribosomal protein uL16 family. Part of the 50S ribosomal subunit.

Binds 23S rRNA and is also seen to make contacts with the A and possibly P site tRNAs. The chain is Large ribosomal subunit protein uL16 from Pelodictyon phaeoclathratiforme (strain DSM 5477 / BU-1).